Here is a 495-residue protein sequence, read N- to C-terminus: UDP-glycosyltransferase 73E1 (495 aa).

UDP-alpha-D-glucose contacts are provided by residues Ser-299, 355-356 (WA), 373-381 (HCGWNSTIE), and 395-398 (FADQ).

The protein belongs to the UDP-glycosyltransferase family.

Its function is as follows. May glycosylate diterpenes or flavonols in leaves. This is UDP-glycosyltransferase 73E1 from Stevia rebaudiana (Stevia).